Reading from the N-terminus, the 73-residue chain is V-type proton ATPase subunit e (73 aa).

Topologically, residues 1 to 3 are lumenal; that stretch reads MSS. Residues 4 to 24 form a helical membrane-spanning segment; sequence FYTVVGVFIVVSAMSVLFWIM. At 25–35 the chain is on the cytoplasmic side; it reads APKNNQAVWRS. The helical transmembrane segment at 36–56 threads the bilayer; that stretch reads TVILTLAMMFLMWAITFLCQL. Residues 57–73 lie on the Lumenal side of the membrane; sequence HPLVAPRRSDLRPEFAE.

This sequence belongs to the V-ATPase e1/e2 subunit family. V-ATPase is a heteromultimeric enzyme composed of a peripheral catalytic V1 complex (components A to H) attached to an integral membrane V0 proton pore complex (components: a, c, c', c'', d, e, f and VOA1).

Its subcellular location is the vacuole membrane. Functionally, subunit of the V0 complex of vacuolar(H+)-ATPase (V-ATPase), a multisubunit enzyme composed of a peripheral complex (V1) that hydrolyzes ATP and a membrane integral complex (V0) that translocates protons. V-ATPase is responsible for acidifying and maintaining the pH of intracellular compartments. The sequence is that of V-type proton ATPase subunit e (VMA9) from Saccharomyces cerevisiae (strain ATCC 204508 / S288c) (Baker's yeast).